The chain runs to 661 residues: UvrABC system protein B (661 aa).

The 154-residue stretch at E25–M178 folds into the Helicase ATP-binding domain. G38–T45 is a binding site for ATP. The Beta-hairpin motif lies at Y91–I114. The 163-residue stretch at Q429–I591 folds into the Helicase C-terminal domain. The 36-residue stretch at E625–L660 folds into the UVR domain.

Belongs to the UvrB family. As to quaternary structure, forms a heterotetramer with UvrA during the search for lesions. Interacts with UvrC in an incision complex.

It localises to the cytoplasm. Its function is as follows. The UvrABC repair system catalyzes the recognition and processing of DNA lesions. A damage recognition complex composed of 2 UvrA and 2 UvrB subunits scans DNA for abnormalities. Upon binding of the UvrA(2)B(2) complex to a putative damaged site, the DNA wraps around one UvrB monomer. DNA wrap is dependent on ATP binding by UvrB and probably causes local melting of the DNA helix, facilitating insertion of UvrB beta-hairpin between the DNA strands. Then UvrB probes one DNA strand for the presence of a lesion. If a lesion is found the UvrA subunits dissociate and the UvrB-DNA preincision complex is formed. This complex is subsequently bound by UvrC and the second UvrB is released. If no lesion is found, the DNA wraps around the other UvrB subunit that will check the other stand for damage. The polypeptide is UvrABC system protein B (Caldicellulosiruptor saccharolyticus (strain ATCC 43494 / DSM 8903 / Tp8T 6331)).